The primary structure comprises 191 residues: Peptidyl-tRNA hydrolase (191 aa).

Residue Y14 coordinates tRNA. The active-site Proton acceptor is H19. Positions 64, 66, and 112 each coordinate tRNA.

The protein belongs to the PTH family. As to quaternary structure, monomer.

The protein localises to the cytoplasm. It catalyses the reaction an N-acyl-L-alpha-aminoacyl-tRNA + H2O = an N-acyl-L-amino acid + a tRNA + H(+). In terms of biological role, hydrolyzes ribosome-free peptidyl-tRNAs (with 1 or more amino acids incorporated), which drop off the ribosome during protein synthesis, or as a result of ribosome stalling. Catalyzes the release of premature peptidyl moieties from peptidyl-tRNA molecules trapped in stalled 50S ribosomal subunits, and thus maintains levels of free tRNAs and 50S ribosomes. The chain is Peptidyl-tRNA hydrolase from Clostridium botulinum (strain Alaska E43 / Type E3).